Consider the following 289-residue polypeptide: Glucosamine-6-phosphate deaminase 1 (289 aa).

Lys64 bears the N6-acetyllysine mark. Catalysis depends on Asp72, which acts as the Proton acceptor; for enolization step. Catalysis depends on Asp141, which acts as the For ring-opening step. The active-site Proton acceptor; for ring-opening step is the His143. The active-site For ring-opening step is the Glu148. Thr161 is subject to Phosphothreonine.

The protein belongs to the glucosamine/galactosamine-6-phosphate isomerase family. As to quaternary structure, homohexamer.

The protein localises to the cytoplasm. The catalysed reaction is alpha-D-glucosamine 6-phosphate + H2O = beta-D-fructose 6-phosphate + NH4(+). The protein operates within nucleotide-sugar biosynthesis; UDP-N-acetyl-alpha-D-glucosamine biosynthesis; alpha-D-glucosamine 6-phosphate from D-fructose 6-phosphate: step 1/1. Allosterically activated by N-acetylglucosamine-6-phosphate (GlcNAc6P). Functionally, catalyzes the reversible conversion of alpha-D-glucosamine 6-phosphate (GlcN-6P) into beta-D-fructose 6-phosphate (Fru-6P) and ammonium ion, a regulatory reaction step in de novo uridine diphosphate-N-acetyl-alpha-D-glucosamine (UDP-GlcNAc) biosynthesis via hexosamine pathway. Deamination is coupled to aldo-keto isomerization mediating the metabolic flux from UDP-GlcNAc toward Fru-6P. At high ammonium level can drive amination and isomerization of Fru-6P toward hexosamines and UDP-GlcNAc synthesis. Has a role in fine tuning the metabolic fluctuations of cytosolic UDP-GlcNAc and their effects on hyaluronan synthesis that occur during tissue remodeling. Seems to trigger calcium oscillations in mammalian eggs. These oscillations serve as the essential trigger for egg activation and early development of the embryo. The polypeptide is Glucosamine-6-phosphate deaminase 1 (Homo sapiens (Human)).